Consider the following 669-residue polypeptide: Elongation factor G 2 (669 aa).

The tr-type G domain occupies 1 to 276 (MSIRNIGIMA…SIVDYLPSPF (276 aa)). GTP-binding positions include 10 to 17 (AHIDAGKT), 74 to 78 (DTPGH), and 128 to 131 (NKMD).

This sequence belongs to the TRAFAC class translation factor GTPase superfamily. Classic translation factor GTPase family. EF-G/EF-2 subfamily.

The protein resides in the cytoplasm. In terms of biological role, catalyzes the GTP-dependent ribosomal translocation step during translation elongation. During this step, the ribosome changes from the pre-translocational (PRE) to the post-translocational (POST) state as the newly formed A-site-bound peptidyl-tRNA and P-site-bound deacylated tRNA move to the P and E sites, respectively. Catalyzes the coordinated movement of the two tRNA molecules, the mRNA and conformational changes in the ribosome. The chain is Elongation factor G 2 (fusB) from Borreliella burgdorferi (strain ATCC 35210 / DSM 4680 / CIP 102532 / B31) (Borrelia burgdorferi).